The primary structure comprises 273 residues: MASTVEFASSFIEGAPPGELADVVSDIKTLTSDGDDIIPSLAPAFERYNESQLATVKLPGASQEVIVSEFNRLEGSRYFDVESQTSFEVDHITQSTSAAQSYVLESQNADLIKSLLKTLGAHAREHYPSSSYGVYPIEKDSAIAILLVANRYSPNNFWNGRYRSIYQFPVGDSTTITGKIHVDVHYYEDGNVALNTTKPLNISVPNASAESIISRIASAERNYQEELNKAFGQMAEGAFKSLRRQLPITRQKVEWEKVGGYRLGQDISGGKGR.

Belongs to the F-actin-capping protein alpha subunit family. In terms of assembly, heterodimer of an alpha and a beta subunit.

Its subcellular location is the cytoplasm. It is found in the cytoskeleton. Its function is as follows. F-actin-capping proteins bind in a Ca(2+)-independent manner to the fast growing ends of actin filaments (barbed end) thereby blocking the exchange of subunits at these ends. Unlike other capping proteins (such as gelsolin and severin), these proteins do not sever actin filaments. The protein is F-actin-capping protein subunit alpha (cap1) of Emericella nidulans (strain FGSC A4 / ATCC 38163 / CBS 112.46 / NRRL 194 / M139) (Aspergillus nidulans).